The primary structure comprises 526 residues: Outer capsid protein VP5 (526 aa).

Positions M1 to E42 are involved in membrane permeabilization.

This sequence belongs to the orbivirus VP5 family.

Its subcellular location is the virion. VP5 protein is one of the two proteins (with VP2) which constitute the virus particle outer capsid. Acts as a membrane permeabilization protein that mediates release of viral particles from endosomal compartments into the cytoplasm. Permeabilization activity is probably negatively regulated by VP2 and is triggered by endosomal degradation of VP2 and exposure to low pH. This chain is Outer capsid protein VP5 (Segment-6), found in Bluetongue virus 1 (isolate South Africa) (BTV 1).